The following is a 660-amino-acid chain: Acetyl-coenzyme A synthetase (660 aa).

Residues 197–200 (RGGK) and Thr317 each bind CoA. ATP contacts are provided by residues 397-399 (GEP), 421-426 (DTFWQT), Asp512, and Arg528. Position 536 (Ser536) interacts with CoA. Position 539 (Arg539) interacts with ATP. The Mg(2+) site is built by Val550 and Val555. At Lys625 the chain carries N6-acetyllysine.

It belongs to the ATP-dependent AMP-binding enzyme family. Requires Mg(2+) as cofactor. Post-translationally, acetylated. Deacetylation by the SIR2-homolog deacetylase activates the enzyme.

The enzyme catalyses acetate + ATP + CoA = acetyl-CoA + AMP + diphosphate. Functionally, catalyzes the conversion of acetate into acetyl-CoA (AcCoA), an essential intermediate at the junction of anabolic and catabolic pathways. AcsA undergoes a two-step reaction. In the first half reaction, AcsA combines acetate with ATP to form acetyl-adenylate (AcAMP) intermediate. In the second half reaction, it can then transfer the acetyl group from AcAMP to the sulfhydryl group of CoA, forming the product AcCoA. This chain is Acetyl-coenzyme A synthetase, found in Ralstonia pickettii (strain 12J).